Reading from the N-terminus, the 416-residue chain is Adenylosuccinate synthetase (416 aa).

GTP contacts are provided by residues 13-19 (GDEGKGK) and 41-43 (GHT). The Proton acceptor role is filled by Asp14. Residues Asp14 and Gly41 each contribute to the Mg(2+) site. IMP-binding positions include 14–17 (DEGK), 39–42 (NAGH), Thr126, Arg140, Gln220, Thr235, and Arg299. His42 acts as the Proton donor in catalysis. 295-301 (TTTGRKR) lines the substrate pocket. GTP contacts are provided by residues Arg301, 327–329 (KLD), and 405–407 (STS).

Belongs to the adenylosuccinate synthetase family. As to quaternary structure, homodimer. Mg(2+) is required as a cofactor.

The protein localises to the cytoplasm. The enzyme catalyses IMP + L-aspartate + GTP = N(6)-(1,2-dicarboxyethyl)-AMP + GDP + phosphate + 2 H(+). It participates in purine metabolism; AMP biosynthesis via de novo pathway; AMP from IMP: step 1/2. Its function is as follows. Plays an important role in the de novo pathway of purine nucleotide biosynthesis. Catalyzes the first committed step in the biosynthesis of AMP from IMP. The polypeptide is Adenylosuccinate synthetase (Campylobacter fetus subsp. fetus (strain 82-40)).